The sequence spans 247 residues: Cobalt transport protein CbiM (247 aa).

The first 21 residues, 1-21 (MVGWGVLILLMVLWLPRQAYA), serve as a signal peptide directing secretion. 7 consecutive transmembrane segments (helical) span residues 27–47 (GYLP…ALIL), 64–84 (LVLA…LPSV), 96–116 (LGAV…ILLF), 119–139 (LLLA…MAVV), 159–179 (GVAV…TTSL), 181–201 (LALA…KFAS), and 202–222 (IFAV…VIMV).

This sequence belongs to the CbiM family. As to quaternary structure, forms an energy-coupling factor (ECF) transporter complex composed of an ATP-binding protein (A component, CbiO), a transmembrane protein (T component, CbiQ) and 2 possible substrate-capture proteins (S components, CbiM and CbiN) of unknown stoichimetry.

Its subcellular location is the cell membrane. It functions in the pathway cofactor biosynthesis; adenosylcobalamin biosynthesis. Part of the energy-coupling factor (ECF) transporter complex CbiMNOQ involved in cobalt import. In Kyrpidia tusciae (strain DSM 2912 / NBRC 15312 / T2) (Bacillus tusciae), this protein is Cobalt transport protein CbiM.